A 342-amino-acid polypeptide reads, in one-letter code: Prenyl transferase ptmC (342 aa).

The chain crosses the membrane as a helical span at residues 17–37; the sequence is LSFLTLTVGALALIVVLYISI. H110 contributes to the isopentenyl diphosphate binding site. Mg(2+) contacts are provided by D117 and D121. R126 contributes to the dimethylallyl diphosphate binding site. N-linked (GlcNAc...) asparagine glycosylation is present at N154. Residues K210, T211, Q240, N247, and K257 each coordinate dimethylallyl diphosphate.

This sequence belongs to the FPP/GGPP synthase family.

Its subcellular location is the membrane. It participates in secondary metabolite biosynthesis. Prenyl transferase; part of the gene cluster that mediates the biosynthesis of the indole diterpenes penitrems. The geranylgeranyl diphosphate (GGPP) synthase ptmG catalyzes the first step in penitrem biosynthesis via conversion of farnesyl pyrophosphate and isopentyl pyrophosphate into geranylgeranyl pyrophosphate (GGPP). Condensation of indole-3-glycerol phosphate with GGPP by the prenyl transferase ptmC then forms 3-geranylgeranylindole (3-GGI). Epoxidation by the FAD-dependent monooxygenase ptmM leads to a epoxidized-GGI that is substrate of the terpene cyclase ptmB for cyclization to yield paspaline. Paspaline is subsequently converted to 13-desoxypaxilline by the cytochrome P450 monooxygenase ptmP, the latter being then converted to paxilline by the cytochrome P450 monooxygenase ptmQ. Paxilline is converted to beta-paxitriol via C-10 ketoreduction by the short-chain dehydrogenase ptmH which can be monoprenylated at the C-20 by the indole diterpene prenyltransferase ptmD. A two-step elimination (acetylation and elimination) process performed by the O-acetyltransferase ptmV and ptmI leads to the production of the prenylated form of penijanthine. The FAD-linked oxidoreductase ptmO then converts the prenylated form of penijanthine into PC-M5 which is in turn transformed into PC-M4 by the aromatic dimethylallyltransferase ptmE. Five sequential oxidative transformations performed by the cytochrome P450 monooxygenases ptmK, ptmU, ptmL, ptmN and ptmJ yield the various penitrem compounds. PtmK, ptmU and ptmM are involved in the formation of the key bicyclic ring of penitrem C via the formation of the intermediates secopenitrem D and penitrem D. PtmL catalyzes the epoxidation of penitrem D and C to yield penitrem B and F, respectively. PtmJ catalyzes the last benzylic hydroxylation to convert penitrem B to prenitrem E and penitrem F to penitrem A. The chain is Prenyl transferase ptmC from Penicillium ochrochloron.